We begin with the raw amino-acid sequence, 82 residues long: Large ribosomal subunit protein bL27c (82 aa).

Positions 1–22 are disordered; sequence MAHKKGAGSTKNGRDSNSKRLG.

The protein belongs to the bacterial ribosomal protein bL27 family.

The protein resides in the plastid. It is found in the chloroplast. This is Large ribosomal subunit protein bL27c (rpl27) from Chrysotila carterae (Marine alga).